An 851-amino-acid polypeptide reads, in one-letter code: Probable disease resistance protein At1g15890 (851 aa).

An NB-ARC domain is found at 139-441 (AEKIPAPKVE…CEGFIDGNED (303 aa)). 181-188 (GMGGVGKT) is an ATP binding site. LRR repeat units follow at residues 514–535 (SLRR…SNSP), 536–557 (NLST…FFRF), 560–582 (ALVV…ISKL), 584–605 (SLQY…FKEL), and 607–629 (KLIH…ATSL).

This sequence belongs to the disease resistance NB-LRR family.

In terms of biological role, probable disease resistance protein. This Arabidopsis thaliana (Mouse-ear cress) protein is Probable disease resistance protein At1g15890.